Reading from the N-terminus, the 252-residue chain is Imidazole glycerol phosphate synthase subunit HisF (252 aa).

Catalysis depends on residues Asp11 and Asp130.

Belongs to the HisA/HisF family. As to quaternary structure, heterodimer of HisH and HisF.

The protein resides in the cytoplasm. The catalysed reaction is 5-[(5-phospho-1-deoxy-D-ribulos-1-ylimino)methylamino]-1-(5-phospho-beta-D-ribosyl)imidazole-4-carboxamide + L-glutamine = D-erythro-1-(imidazol-4-yl)glycerol 3-phosphate + 5-amino-1-(5-phospho-beta-D-ribosyl)imidazole-4-carboxamide + L-glutamate + H(+). The protein operates within amino-acid biosynthesis; L-histidine biosynthesis; L-histidine from 5-phospho-alpha-D-ribose 1-diphosphate: step 5/9. Its function is as follows. IGPS catalyzes the conversion of PRFAR and glutamine to IGP, AICAR and glutamate. The HisF subunit catalyzes the cyclization activity that produces IGP and AICAR from PRFAR using the ammonia provided by the HisH subunit. The sequence is that of Imidazole glycerol phosphate synthase subunit HisF from Azoarcus sp. (strain BH72).